Here is a 441-residue protein sequence, read N- to C-terminus: Damage-control phosphatase ARMT1 (441 aa).

Residue A2 is modified to N-acetylalanine. At K40 the chain carries N6-acetyllysine. A Phosphoserine modification is found at S102. Mn(2+) contacts are provided by D253 and N254. Substrate is bound at residue 253 to 254; that stretch reads DN. Residues E258 and D291 each coordinate S-adenosyl-L-methionine. D291 is a Mn(2+) binding site. Residues 367 to 371 and K404 contribute to the substrate site; that span reads DLNYR. The short motif at 401–404 is the Subfamily III RTxK motif element; sequence RTLK.

Belongs to the damage-control phosphatase family. Sugar phosphate phosphatase III subfamily. Requires Mn(2+) as cofactor. Ni(2+) serves as cofactor. In terms of processing, automethylated.

The catalysed reaction is beta-D-fructose 1-phosphate + H2O = D-fructose + phosphate. The enzyme catalyses beta-D-fructose 6-phosphate = dihydroxyacetone + D-glyceraldehyde 3-phosphate. It carries out the reaction L-glutamyl-[protein] + S-adenosyl-L-methionine = [protein]-L-glutamate 5-O-methyl ester + S-adenosyl-L-homocysteine. Its function is as follows. Metal-dependent phosphatase that shows phosphatase activity against several substrates, including fructose-1-phosphate and fructose-6-phosphate. Its preference for fructose-1-phosphate, a strong glycating agent that causes DNA damage rather than a canonical yeast metabolite, suggests a damage-control function in hexose phosphate metabolism. Has also been shown to have O-methyltransferase activity that methylates glutamate residues of target proteins to form gamma-glutamyl methyl ester residues. Possibly methylates PCNA, suggesting it is involved in the DNA damage response. This Bos taurus (Bovine) protein is Damage-control phosphatase ARMT1.